A 372-amino-acid chain; its full sequence is N-methyl-L-tryptophan oxidase (372 aa).

4-34 (DLIIIGSGSVGAAAGYYATRAGLNVLMTDAH) serves as a coordination point for FAD. Cys308 is subject to S-8alpha-FAD cysteine.

It belongs to the MSOX/MTOX family. MTOX subfamily. In terms of assembly, monomer. FAD serves as cofactor.

The catalysed reaction is N(alpha)-methyl-L-tryptophan + O2 + H2O = L-tryptophan + formaldehyde + H2O2. Functionally, catalyzes the oxidative demethylation of N-methyl-L-tryptophan. This chain is N-methyl-L-tryptophan oxidase, found in Escherichia coli O1:K1 / APEC.